The following is a 66-amino-acid chain: Toxin BeM14 (66 aa).

One can recognise an LCN-type CS-alpha/beta domain in the interval R2–R66. Intrachain disulfides connect C12/C65, C16/C36, C22/C46, and C26/C48.

It belongs to the long (4 C-C) scorpion toxin superfamily. Sodium channel inhibitor family. Alpha subfamily. In terms of tissue distribution, expressed by the venom gland.

The protein localises to the secreted. Alpha toxins bind voltage-independently at site-3 of sodium channels (Nav) and inhibit the inactivation of the activated channels, thereby blocking neuronal transmission. Has paralytic activity in mice. This Mesobuthus eupeus (Lesser Asian scorpion) protein is Toxin BeM14.